A 349-amino-acid chain; its full sequence is Hypoxia-inducible factor 1-alpha inhibitor (349 aa).

Over residues 1–10 the composition is skewed to low complexity; sequence MAATAAEAVA. The tract at residues 1–51 is disordered; that stretch reads MAATAAEAVASGSGEPREEAGALGPAWDESQLRSYSFPTRPIPRLSQSDPR. At A2 the chain carries N-acetylalanine. The interval 2-125 is interaction with VHL; the sequence is AATAAEAVAS…PRSNREEMKF (124 aa). The JmjC domain occupies 142–312; the sequence is ERLYLQQTLN…PKRIEYPLKA (171 aa). Y145 provides a ligand contact to 2-oxoglutarate. Residues D152 and 181-183 contribute to the substrate site; that span reads QLT. T196 contributes to the 2-oxoglutarate binding site. H199 and D201 together coordinate Fe cation. Position 201 to 203 (201 to 203) interacts with substrate; the sequence is DEQ. 2-oxoglutarate-binding residues include N205 and K214. Residue 238–239 coordinates substrate; sequence RQ. H279 contributes to the Fe cation binding site. N294 contributes to the 2-oxoglutarate binding site. 2 residues coordinate substrate: A300 and N321.

As to quaternary structure, homodimer; homodimerization is essential for catalytic activity. Interacts with VHL and HIF1A. Part of a complex with VHL, HIF1A and HDAC1 or HDAC2 or HDAC3. Interacts with NFKB1 and NFKBIA. Interacts with NOTCH1, NOTCH2 and NOTCH3 but not with NOTCH4. Interacts with APBA3; binding inhibits HIF1AN binding to HIF1A. Interacts with TNKS2. Interacts with PPP1R12A. Interacts with ASB4. Interacts with UBE3A. Interacts with ANKS3. Interacts with NECAB3; the interaction is indirect and seems to be mediated by APBA3. Fe(2+) is required as a cofactor.

The protein localises to the nucleus. The protein resides in the cytoplasm. It is found in the perinuclear region. The enzyme catalyses L-asparaginyl-[hypoxia-inducible factor alpha subunit] + 2-oxoglutarate + O2 = (3S)-3-hydroxy-L-asparaginyl-[hypoxia-inducible factor alpha subunit] + succinate + CO2. It carries out the reaction L-histidyl-[ankyrin-repeat domain protein] + 2-oxoglutarate + O2 = (3S)-3-hydroxy-L-histidyl-[ankyrin-repeat domain protein] + succinate + CO2. It catalyses the reaction L-asparaginyl-[ankyrin-repeat domain protein] + 2-oxoglutarate + O2 = (3S)-3-hydroxy-L-asparaginyl-[ankyrin-repeat domain protein] + succinate + CO2. The catalysed reaction is L-aspartyl-[ankyrin-repeat domain protein] + 2-oxoglutarate + O2 = (3S)-3-hydroxy-L-aspartyl-[ankyrin-repeat domain protein] + succinate + CO2. Functionally, hydroxylates HIF-1 alpha at 'Asn-803' in the C-terminal transactivation domain (CAD). Functions as an oxygen sensor and, under normoxic conditions, the hydroxylation prevents interaction of HIF-1 with transcriptional coactivators including Cbp/p300-interacting transactivator. Involved in transcriptional repression through interaction with HIF1A, VHL and histone deacetylases. Hydroxylates specific Asn residues within ankyrin repeat domains (ARD) of NFKB1, NFKBIA, NOTCH1, ASB4, PPP1R12A and several other ARD-containing proteins. Also hydroxylates Asp and His residues within ARDs of ANK1 and TNKS2, respectively. Negatively regulates NOTCH1 activity, accelerating myogenic differentiation. Positively regulates ASB4 activity, promoting vascular differentiation. The sequence is that of Hypoxia-inducible factor 1-alpha inhibitor (HIF1AN) from Homo sapiens (Human).